We begin with the raw amino-acid sequence, 469 residues long: Asparagine--tRNA ligase (469 aa).

Belongs to the class-II aminoacyl-tRNA synthetase family. As to quaternary structure, homodimer.

The protein localises to the cytoplasm. It catalyses the reaction tRNA(Asn) + L-asparagine + ATP = L-asparaginyl-tRNA(Asn) + AMP + diphosphate + H(+). The chain is Asparagine--tRNA ligase from Porphyromonas gingivalis (strain ATCC 33277 / DSM 20709 / CIP 103683 / JCM 12257 / NCTC 11834 / 2561).